The sequence spans 433 residues: Enolase (433 aa).

Position 163 (Gln-163) interacts with (2R)-2-phosphoglycerate. Glu-205 (proton donor) is an active-site residue. Residues Asp-241, Glu-289, and Asp-316 each contribute to the Mg(2+) site. Residues Lys-341, Arg-370, Ser-371, and Lys-392 each coordinate (2R)-2-phosphoglycerate. Lys-341 acts as the Proton acceptor in catalysis.

Belongs to the enolase family. The cofactor is Mg(2+).

Its subcellular location is the cytoplasm. It localises to the secreted. The protein resides in the cell surface. The enzyme catalyses (2R)-2-phosphoglycerate = phosphoenolpyruvate + H2O. Its pathway is carbohydrate degradation; glycolysis; pyruvate from D-glyceraldehyde 3-phosphate: step 4/5. Catalyzes the reversible conversion of 2-phosphoglycerate (2-PG) into phosphoenolpyruvate (PEP). It is essential for the degradation of carbohydrates via glycolysis. The polypeptide is Enolase (Treponema denticola (strain ATCC 35405 / DSM 14222 / CIP 103919 / JCM 8153 / KCTC 15104)).